A 596-amino-acid chain; its full sequence is tRNA(Met) cytidine acetyltransferase TmcA (596 aa).

ATP is bound by residues Q138, 160 to 169 (GRGKSTLAGK), and R285. An N-acetyltransferase domain is found at 328-481 (SDLRRLFDAQ…SGYHSAMMLY (154 aa)). Residues 406–408 (IAV) and 413–419 (QKQGIGK) contribute to the acetyl-CoA site.

Belongs to the RNA cytidine acetyltransferase family. TmcA subfamily.

It localises to the cytoplasm. It carries out the reaction cytidine(34) in elongator tRNA(Met) + acetyl-CoA + ATP + H2O = N(4)-acetylcytidine(34) in elongator tRNA(Met) + ADP + phosphate + CoA + H(+). Catalyzes the formation of N(4)-acetylcytidine (ac(4)C) at the wobble position of tRNA(Met), by using acetyl-CoA as an acetyl donor and ATP (or GTP). The protein is tRNA(Met) cytidine acetyltransferase TmcA of Actinobacillus pleuropneumoniae serotype 5b (strain L20).